The primary structure comprises 175 residues: Orotate phosphoribosyltransferase (175 aa).

Residues Arg88, Lys89, Lys92, and 114 to 122 (EDVVTTARG) contribute to the 5-phospho-alpha-D-ribose 1-diphosphate site. 2 residues coordinate orotate: Thr118 and Arg146.

This sequence belongs to the purine/pyrimidine phosphoribosyltransferase family. PyrE subfamily. In terms of assembly, homodimer. Mg(2+) is required as a cofactor.

It carries out the reaction orotidine 5'-phosphate + diphosphate = orotate + 5-phospho-alpha-D-ribose 1-diphosphate. It participates in pyrimidine metabolism; UMP biosynthesis via de novo pathway; UMP from orotate: step 1/2. In terms of biological role, catalyzes the transfer of a ribosyl phosphate group from 5-phosphoribose 1-diphosphate to orotate, leading to the formation of orotidine monophosphate (OMP). In Methanocella arvoryzae (strain DSM 22066 / NBRC 105507 / MRE50), this protein is Orotate phosphoribosyltransferase.